The sequence spans 256 residues: Pimeloyl-[acyl-carrier protein] methyl ester esterase (256 aa).

One can recognise an AB hydrolase-1 domain in the interval 15–242 (HLVLLHGWGL…AAHAPFISHP (228 aa)). Substrate contacts are provided by residues W22, 82–83 (SL), and 143–147 (FLALQ). S82 serves as the catalytic Nucleophile. Catalysis depends on residues D207 and H235. H235 is a binding site for substrate.

Belongs to the AB hydrolase superfamily. Carboxylesterase BioH family. As to quaternary structure, monomer.

The protein localises to the cytoplasm. The catalysed reaction is 6-carboxyhexanoyl-[ACP] methyl ester + H2O = 6-carboxyhexanoyl-[ACP] + methanol + H(+). It participates in cofactor biosynthesis; biotin biosynthesis. Its function is as follows. The physiological role of BioH is to remove the methyl group introduced by BioC when the pimeloyl moiety is complete. It allows to synthesize pimeloyl-ACP via the fatty acid synthetic pathway through the hydrolysis of the ester bonds of pimeloyl-ACP esters. In Escherichia coli O8 (strain IAI1), this protein is Pimeloyl-[acyl-carrier protein] methyl ester esterase.